The chain runs to 134 residues: Small ribosomal subunit protein bS6 (134 aa).

The segment covering 113–122 has biased composition (basic and acidic residues); it reads NKDIKEKEQP. A disordered region spans residues 113 to 134; the sequence is NKDIKEKEQPSESNVDADLKVN.

It belongs to the bacterial ribosomal protein bS6 family.

Its function is as follows. Binds together with bS18 to 16S ribosomal RNA. This chain is Small ribosomal subunit protein bS6, found in Borrelia recurrentis (strain A1).